We begin with the raw amino-acid sequence, 194 residues long: Thymidylate kinase (194 aa).

7-14 (GVDCVGKS) is a binding site for ATP.

The protein belongs to the thymidylate kinase family.

It carries out the reaction dTMP + ATP = dTDP + ADP. In terms of biological role, phosphorylation of dTMP to form dTDP in both de novo and salvage pathways of dTTP synthesis. The chain is Thymidylate kinase from Campylobacter lari (strain RM2100 / D67 / ATCC BAA-1060).